Reading from the N-terminus, the 152-residue chain is Methylglyoxal synthase (152 aa).

Residues 5–152 enclose the MGS-like domain; that stretch reads TRTVQAQKHI…YQLYLQQRLK (148 aa). Substrate-binding positions include His19, Lys23, 45 to 48, and 65 to 66; these read TGTT and SG. Asp71 functions as the Proton donor/acceptor in the catalytic mechanism. His98 provides a ligand contact to substrate.

Belongs to the methylglyoxal synthase family.

The catalysed reaction is dihydroxyacetone phosphate = methylglyoxal + phosphate. In terms of biological role, catalyzes the formation of methylglyoxal from dihydroxyacetone phosphate. This Erwinia tasmaniensis (strain DSM 17950 / CFBP 7177 / CIP 109463 / NCPPB 4357 / Et1/99) protein is Methylglyoxal synthase.